Consider the following 78-residue polypeptide: Translational regulator CsrA (78 aa).

It belongs to the CsrA/RsmA family. Homodimer; the beta-strands of each monomer intercalate to form a hydrophobic core, while the alpha-helices form wings that extend away from the core.

The protein localises to the cytoplasm. In terms of biological role, a translational regulator that binds mRNA to regulate translation initiation and/or mRNA stability. Usually binds in the 5'-UTR at or near the Shine-Dalgarno sequence preventing ribosome-binding, thus repressing translation. Its main target seems to be the major flagellin gene, while its function is anatagonized by FliW. The polypeptide is Translational regulator CsrA (Caldicellulosiruptor bescii (strain ATCC BAA-1888 / DSM 6725 / KCTC 15123 / Z-1320) (Anaerocellum thermophilum)).